A 381-amino-acid chain; its full sequence is Penicillin-binding protein 4 (381 aa).

Ser-60 functions as the Acyl-ester intermediate in the catalytic mechanism. A helical membrane pass occupies residues 271-291 (VAGCLDTWSFMATGWGHGWAL). Residue 299–308 (GYGHDGASGG) coordinates NAD(+). A helical membrane pass occupies residues 315–340 (VVPGSGVVAALLTNGGVATSFFTDLF).

It belongs to the beta-lactamase family.

The protein resides in the cell membrane. In terms of biological role, involved in cell wall biosynthesis and may also act as a sensor of external penicillins. This Amycolatopsis lactamdurans (Nocardia lactamdurans) protein is Penicillin-binding protein 4 (pbp).